Reading from the N-terminus, the 93-residue chain is Alpha-defensin 15 (93 aa).

Residues 1–19 form the signal peptide; sequence MKTLVLLSALVLLAFQVQA. Positions 20-58 are excised as a propeptide; that stretch reads DPIQNTDEETKTEEQPGEDDQAVSVSFGDPEGSSLQEES. Positions 23–56 are disordered; that stretch reads QNTDEETKTEEQPGEDDQAVSVSFGDPEGSSLQE. Intrachain disulfides connect Cys-64/Cys-92, Cys-66/Cys-81, and Cys-71/Cys-91.

The protein belongs to the alpha-defensin family. Paneth cells of the small bowel.

It is found in the secreted. Its function is as follows. Probably contributes to the antimicrobial barrier function of the small bowel mucosa. The chain is Alpha-defensin 15 (Defa15) from Mus musculus (Mouse).